We begin with the raw amino-acid sequence, 33 residues long: Cysteine-rich venom protein tripurin (33 aa).

The protein belongs to the CRISP family. Contains 8 disulfide bonds. Expressed by the venom gland.

It localises to the secreted. Its function is as follows. Blocks contraction of smooth muscle elicited by high potassium-induced depolarization, but does not block caffeine-stimulated contraction. May target voltage-gated calcium channels on smooth muscle. This is Cysteine-rich venom protein tripurin from Trimeresurus purpureomaculatus (Mangrove pit viper).